The sequence spans 260 residues: 3-dehydroquinate dehydratase (260 aa).

Residues 50–52 (EWR) and R86 contribute to the 3-dehydroquinate site. Catalysis depends on H148, which acts as the Proton donor/acceptor. The active-site Schiff-base intermediate with substrate is the K175. 3-dehydroquinate-binding residues include R217, S236, and Q240.

It belongs to the type-I 3-dehydroquinase family. Homodimer.

The enzyme catalyses 3-dehydroquinate = 3-dehydroshikimate + H2O. It participates in metabolic intermediate biosynthesis; chorismate biosynthesis; chorismate from D-erythrose 4-phosphate and phosphoenolpyruvate: step 3/7. Its function is as follows. Involved in the third step of the chorismate pathway, which leads to the biosynthesis of aromatic amino acids. Catalyzes the cis-dehydration of 3-dehydroquinate (DHQ) and introduces the first double bond of the aromatic ring to yield 3-dehydroshikimate. The polypeptide is 3-dehydroquinate dehydratase (Aromatoleum aromaticum (strain DSM 19018 / LMG 30748 / EbN1) (Azoarcus sp. (strain EbN1))).